The primary structure comprises 100 residues: Urease subunit gamma (100 aa).

It belongs to the urease gamma subunit family. In terms of assembly, heterotrimer of UreA (gamma), UreB (beta) and UreC (alpha) subunits. Three heterotrimers associate to form the active enzyme.

The protein localises to the cytoplasm. It carries out the reaction urea + 2 H2O + H(+) = hydrogencarbonate + 2 NH4(+). It functions in the pathway nitrogen metabolism; urea degradation; CO(2) and NH(3) from urea (urease route): step 1/1. The protein is Urease subunit gamma of Paenarthrobacter aurescens (strain TC1).